Here is a 185-residue protein sequence, read N- to C-terminus: Ribosome-recycling factor (185 aa).

Belongs to the RRF family.

The protein localises to the cytoplasm. Responsible for the release of ribosomes from messenger RNA at the termination of protein biosynthesis. May increase the efficiency of translation by recycling ribosomes from one round of translation to another. This Pseudomonas aeruginosa (strain LESB58) protein is Ribosome-recycling factor.